The sequence spans 283 residues: Pantothenate synthetase (283 aa).

Position 26–33 (26–33 (MGNLHEGH)) interacts with ATP. His-33 functions as the Proton donor in the catalytic mechanism. Gln-57 lines the (R)-pantoate pocket. Position 57 (Gln-57) interacts with beta-alanine. 144–147 (GKKD) contacts ATP. Gln-150 contributes to the (R)-pantoate binding site. Residues Val-173 and 181 to 184 (LSSR) each bind ATP.

It belongs to the pantothenate synthetase family. In terms of assembly, homodimer.

The protein resides in the cytoplasm. The catalysed reaction is (R)-pantoate + beta-alanine + ATP = (R)-pantothenate + AMP + diphosphate + H(+). Its pathway is cofactor biosynthesis; (R)-pantothenate biosynthesis; (R)-pantothenate from (R)-pantoate and beta-alanine: step 1/1. In terms of biological role, catalyzes the condensation of pantoate with beta-alanine in an ATP-dependent reaction via a pantoyl-adenylate intermediate. This Ralstonia pickettii (strain 12J) protein is Pantothenate synthetase.